The sequence spans 24 residues: Caerulein precursor fragment B4 (24 aa).

Expressed by the skin glands.

The protein resides in the secreted. Functionally, has antibacterial and antifungal activity. This chain is Caerulein precursor fragment B4, found in Xenopus borealis (Kenyan clawed frog).